A 393-amino-acid polypeptide reads, in one-letter code: Phospholipid-transporting ATPase accessory subunit CRF1 (393 aa).

Residues 1-46 lie on the Cytoplasmic side of the membrane; the sequence is MGLILRWKEKKQLSSKQNAQKSRKPANTSFRQQRLKAWQPILSPQS. The chain crosses the membrane as a helical span at residues 47 to 67; it reads VLPLLILMACVFAPIGIGLVV. Over 68-334 the chain is Lumenal; it reads STISVQRLVV…NSIIGAGNEA (267 aa). The interval 70–332 is confers specificity for binding DNF3; that stretch reads ISVQRLVVNY…TTNSIIGAGN (263 aa). Residues Asn-78, Asn-123, Asn-187, Asn-202, Asn-213, Asn-240, and Asn-291 are each glycosylated (N-linked (GlcNAc...) asparagine). 2 cysteine pairs are disulfide-bonded: Cys-82/Cys-126 and Cys-179/Cys-193. The helical transmembrane segment at 335 to 355 threads the bilayer; sequence LGIVYLIVAGIATLFAILFLI. Residues 356–393 are Cytoplasmic-facing; that stretch reads KVIFKPRPMHDHSYLNFENSDTPFDESSVVSIPLREIL.

The protein belongs to the CDC50/LEM3 family. In terms of assembly, component of a flippase complex consisting of DNF3 and YNR048W/CRF1. Interacts with DNF3; the interaction is direct and required for proper expression and endoplasmic reticulum (ER) export of either partner.

It is found in the golgi apparatus. Its subcellular location is the trans-Golgi network membrane. Accessory component of a P4-ATPase flippase complex which catalyzes the hydrolysis of ATP coupled to the transport of phosphatidylcholine and small amounts of phosphatidylethanolamine from the lumen to the cytosolic leaflet of the trans-Golgi network and ensures the maintenance of asymmetric distribution of phospholipids. May be involved in transport from early endosomes to the trans-Golgi network (TGN). The sequence is that of Phospholipid-transporting ATPase accessory subunit CRF1 from Saccharomyces cerevisiae (strain ATCC 204508 / S288c) (Baker's yeast).